Consider the following 34-residue polypeptide: Mu-theraphotoxin-CCy1a (34 aa).

Cystine bridges form between Cys3–Cys18, Cys10–Cys23, and Cys17–Cys30.

The protein belongs to the neurotoxin 10 (Hwtx-1) family. 14 (Hntx-1) subfamily. Expressed by the venom gland.

Its subcellular location is the secreted. Its function is as follows. Voltage-gated sodium channel Nav1.7/SCN9A inhibitor. This Chromatopelma cyaneopubescens (Greenbottle blue tarantula) protein is Mu-theraphotoxin-CCy1a.